The sequence spans 339 residues: MVREEVAGSTQTLQWKCVESRVDSKRLYYGRFILSPLRKGQADTVGIALRRALLGEIEGTCITRAKFGSVPHEYSTIAGIEESVQEILLNLKEIVLRSNLYGVRDASICVKGPRYITAQDIILPPSVEIVDTAQPIANLTEPIDFCIDLQIKRDRGYQTELRKNYQDGSYPIDAVSMPVRNVNYSIFSCGNGNEKHEILFLEIWTNGSLTPKEALYEASRNLIDLFLPFLHAEEEGASFEENKNRFTPPLFTFQKRLTNLKKNKKGIPLNCIFIDQLELTSRTYNCLKRANIHTLLDLLSKTEEDLLRIDSFRMEDRKHIWDTLEKHLPIDLLKNKLSF.

An alpha N-terminal domain (alpha-NTD) region spans residues 1–233; it reads MVREEVAGST…DLFLPFLHAE (233 aa). The segment at 266–339 is alpha C-terminal domain (alpha-CTD); that stretch reads GIPLNCIFID…IDLLKNKLSF (74 aa).

The protein belongs to the RNA polymerase alpha chain family. In plastids the minimal PEP RNA polymerase catalytic core is composed of four subunits: alpha, beta, beta', and beta''. When a (nuclear-encoded) sigma factor is associated with the core the holoenzyme is formed, which can initiate transcription.

It localises to the plastid. It is found in the chloroplast. The catalysed reaction is RNA(n) + a ribonucleoside 5'-triphosphate = RNA(n+1) + diphosphate. Its function is as follows. DNA-dependent RNA polymerase catalyzes the transcription of DNA into RNA using the four ribonucleoside triphosphates as substrates. In Aegilops speltoides (Goatgrass), this protein is DNA-directed RNA polymerase subunit alpha.